Here is a 263-residue protein sequence, read N- to C-terminus: Indole-3-glycerol phosphate synthase (263 aa).

Belongs to the TrpC family.

It catalyses the reaction 1-(2-carboxyphenylamino)-1-deoxy-D-ribulose 5-phosphate + H(+) = (1S,2R)-1-C-(indol-3-yl)glycerol 3-phosphate + CO2 + H2O. It functions in the pathway amino-acid biosynthesis; L-tryptophan biosynthesis; L-tryptophan from chorismate: step 4/5. The chain is Indole-3-glycerol phosphate synthase from Aliarcobacter butzleri (strain RM4018) (Arcobacter butzleri).